Consider the following 135-residue polypeptide: MVLAASVVQEVANVPFAHEVAGLVQPVAEAQNVLGLIPMSHGLILAGILFAIGLCGVMVRRNFLFMLMSLEIMMNAAALAFVVAGSRWVDPDGQIMFIFILTLAAAEAAIGLAILLRFYHQRGHLDVDSANEMKG.

A run of 3 helical transmembrane segments spans residues 33–53, 63–83, and 95–115; these read VLGL…FAIG, FLFM…AFVV, and IMFI…LAIL.

This sequence belongs to the complex I subunit 4L family. NDH-1 is composed of 14 different subunits. Subunits NuoA, H, J, K, L, M, N constitute the membrane sector of the complex.

It is found in the cell inner membrane. It carries out the reaction a quinone + NADH + 5 H(+)(in) = a quinol + NAD(+) + 4 H(+)(out). Functionally, NDH-1 shuttles electrons from NADH, via FMN and iron-sulfur (Fe-S) centers, to quinones in the respiratory chain. The immediate electron acceptor for the enzyme in this species is believed to be ubiquinone. Couples the redox reaction to proton translocation (for every two electrons transferred, four hydrogen ions are translocated across the cytoplasmic membrane), and thus conserves the redox energy in a proton gradient. The sequence is that of NADH-quinone oxidoreductase subunit K from Psychrobacter cryohalolentis (strain ATCC BAA-1226 / DSM 17306 / VKM B-2378 / K5).